Here is a 443-residue protein sequence, read N- to C-terminus: Arginine biosynthesis bifunctional protein ArgJ, mitochondrial (443 aa).

Substrate is bound by residues T179, K206, T217, E303, N438, and S443. The active-site Nucleophile is T217.

It belongs to the ArgJ family. As to quaternary structure, heterodimer of an alpha and a beta chain. The alpha and beta chains are autoproteolytically processed from a single precursor protein within the mitochondrion.

It is found in the mitochondrion matrix. It carries out the reaction N(2)-acetyl-L-ornithine + L-glutamate = N-acetyl-L-glutamate + L-ornithine. The enzyme catalyses L-glutamate + acetyl-CoA = N-acetyl-L-glutamate + CoA + H(+). The protein operates within amino-acid biosynthesis; L-arginine biosynthesis; L-ornithine and N-acetyl-L-glutamate from L-glutamate and N(2)-acetyl-L-ornithine (cyclic): step 1/1. It participates in amino-acid biosynthesis; L-arginine biosynthesis; N(2)-acetyl-L-ornithine from L-glutamate: step 1/4. In terms of biological role, catalyzes two activities which are involved in the cyclic version of arginine biosynthesis: the synthesis of acetylglutamate from glutamate and acetyl-CoA, and of ornithine by transacetylation between acetylornithine and glutamate. In Eremothecium gossypii (strain ATCC 10895 / CBS 109.51 / FGSC 9923 / NRRL Y-1056) (Yeast), this protein is Arginine biosynthesis bifunctional protein ArgJ, mitochondrial.